The sequence spans 276 residues: Undecaprenyl-diphosphatase (276 aa).

The next 5 membrane-spanning stretches (helical) occupy residues 85-105, 108-128, 187-207, 217-237, and 253-273; these read MNVV…EKTI, VLFA…AILW, VATE…TLYE, VDSV…AFAC, and FAWY…SGWI.

The protein belongs to the UppP family.

The protein resides in the cell inner membrane. It catalyses the reaction di-trans,octa-cis-undecaprenyl diphosphate + H2O = di-trans,octa-cis-undecaprenyl phosphate + phosphate + H(+). Catalyzes the dephosphorylation of undecaprenyl diphosphate (UPP). Confers resistance to bacitracin. The polypeptide is Undecaprenyl-diphosphatase (Burkholderia mallei (strain NCTC 10247)).